A 216-amino-acid polypeptide reads, in one-letter code: Vascular endothelial growth factor A (216 aa).

A signal peptide spans 1-26; it reads MNFLLTWIHWGLAALLYLQSAELSKA. Disulfide bonds link Cys-52–Cys-94, Cys-83–Cys-128, and Cys-87–Cys-130. N-linked (GlcNAc...) asparagine glycosylation is present at Asn-101. Residues 132–141 show a composition bias toward basic and acidic residues; sequence PKKDVKNKQE. The tract at residues 132–167 is disordered; it reads PKKDVKNKQEKKSKRGKGKGQKRKRKKGRYKPPSFH. A compositionally biased stretch (basic residues) spans 142-161; that stretch reads KKSKRGKGKGQKRKRKKGRY.

The protein belongs to the PDGF/VEGF growth factor family. In terms of assembly, homodimer; disulfide-linked. Also found as heterodimer with PGF.

In terms of biological role, growth factor active in angiogenesis, vasculogenesis and endothelial cell growth. Induces endothelial cell proliferation, promotes cell migration, inhibits apoptosis and induces permeabilization of blood vessels. Binds to the FLT1/VEGFR1 and KDR/VEGFR2 receptors, heparan sulfate and heparin. The polypeptide is Vascular endothelial growth factor A (VEGFA) (Gallus gallus (Chicken)).